The primary structure comprises 724 residues: Catalase-peroxidase (724 aa).

The segment at residues 96–225 is a cross-link (tryptophyl-tyrosyl-methioninium (Trp-Tyr) (with M-251)); that stretch reads WHAAGTYRVA…LAAVMMGLIY (130 aa). The active-site Proton acceptor is the H97. The tryptophyl-tyrosyl-methioninium (Tyr-Met) (with W-96) cross-link spans 225–251; the sequence is YVNPEGVDGNPDPLRTAEDVRITFERM. H266 lines the heme b pocket.

The protein belongs to the peroxidase family. Peroxidase/catalase subfamily. As to quaternary structure, homodimer or homotetramer. Heme b is required as a cofactor. In terms of processing, formation of the three residue Trp-Tyr-Met cross-link is important for the catalase, but not the peroxidase activity of the enzyme.

The enzyme catalyses H2O2 + AH2 = A + 2 H2O. The catalysed reaction is 2 H2O2 = O2 + 2 H2O. In terms of biological role, bifunctional enzyme with both catalase and broad-spectrum peroxidase activity. The sequence is that of Catalase-peroxidase from Halorhodospira halophila (strain DSM 244 / SL1) (Ectothiorhodospira halophila (strain DSM 244 / SL1)).